Here is a 480-residue protein sequence, read N- to C-terminus: ATP synthase subunit beta (480 aa).

ATP is bound at residue 166 to 173 (GGAGVGKT).

This sequence belongs to the ATPase alpha/beta chains family. In terms of assembly, F-type ATPases have 2 components, CF(1) - the catalytic core - and CF(0) - the membrane proton channel. CF(1) has five subunits: alpha(3), beta(3), gamma(1), delta(1), epsilon(1). CF(0) has three main subunits: a(1), b(2) and c(9-12). The alpha and beta chains form an alternating ring which encloses part of the gamma chain. CF(1) is attached to CF(0) by a central stalk formed by the gamma and epsilon chains, while a peripheral stalk is formed by the delta and b chains.

The protein resides in the cell membrane. It catalyses the reaction ATP + H2O + 4 H(+)(in) = ADP + phosphate + 5 H(+)(out). Produces ATP from ADP in the presence of a proton gradient across the membrane. The catalytic sites are hosted primarily by the beta subunits. The sequence is that of ATP synthase subunit beta from Streptomyces griseus subsp. griseus (strain JCM 4626 / CBS 651.72 / NBRC 13350 / KCC S-0626 / ISP 5235).